Reading from the N-terminus, the 156-residue chain is Arginine repressor (156 aa).

It belongs to the ArgR family.

The protein resides in the cytoplasm. Its pathway is amino-acid biosynthesis; L-arginine biosynthesis [regulation]. Its function is as follows. Regulates arginine biosynthesis genes. In Enterobacter sp. (strain 638), this protein is Arginine repressor.